The chain runs to 885 residues: Exosome complex component 10 (885 aa).

Basic and acidic residues predominate over residues 1 to 10 (MAPPSPREHQ). 2 disordered regions span residues 1–23 (MAPPSPREHQSAPATGATKPDAE) and 210–232 (KPLPQALSKERRERPQDRPEDLD). Residue K19 forms a Glycyl lysine isopeptide (Lys-Gly) (interchain with G-Cter in SUMO2) linkage. Residues 217-230 (SKERRERPQDRPED) are compositionally biased toward basic and acidic residues. The 167-residue stretch at 289-455 (HVVSSLDELV…YIYDRMRLEL (167 aa)) folds into the 3'-5' exonuclease domain. D313, E315, D371, and D440 together coordinate Mg(2+). Residues 503–583 (NSQQLTAFQL…QQAREMPLLK (81 aa)) form the HRDC domain. Residue K583 forms a Glycyl lysine isopeptide (Lys-Gly) (interchain with G-Cter in SUMO1); alternate linkage. A Glycyl lysine isopeptide (Lys-Gly) (interchain with G-Cter in SUMO2); alternate cross-link involves residue K583. Residue K710 forms a Glycyl lysine isopeptide (Lys-Gly) (interchain with G-Cter in SUMO2) linkage. The interval 730–885 (VQKEPKEAAK…RGFRHNWPKR (156 aa)) is disordered. Basic and acidic residues-rich tracts occupy residues 732 to 756 (KEPKEAAKKKVAEQTAAREETKEES) and 776 to 794 (ATKKRERATSDLRTIEQKQ). Position 821 is a phosphoserine (S821). Glycyl lysine isopeptide (Lys-Gly) (interchain with G-Cter in SUMO2) cross-links involve residues K833, K859, and K873.

The protein belongs to the exosome component 10/RRP6 family. Component of the RNA exosome complex. The catalytically inactive RNA exosome core complex (Exo-9) associates with the catalytic subunit EXOSC10/RRP6 (via its N-terminus). Exo-9 may associate with DIS3 to form the nucleolar exosome complex, or DIS3L to form the cytoplasmic exosome complex. The RNA exosome complex interacts with cofactors C1D/RRP47, MPHOSPH6/MPP6 and MTREX/MTR4. Interacts with MTREX; the interaction with MTREX mediates the association of MTREX with nuclear RNA exosomes. Part of the small subunit (SSU) processome, composed of more than 70 proteins and the RNA chaperone small nucleolar RNA (snoRNA) U3. Interacts with ALYREF/THOC4. Interacts with DHX36; this interaction occurs in a RNase-insensitive manner. Interacts with NRDE2. Interacts (via C-terminus) with USP36 (via C-terminus); the interaction is facilitated by the association with RNA and promotes sumoylation of EXOSC10. Mg(2+) is required as a cofactor. In terms of processing, sumoylated by USP36; sumoylation does not significantly affect EXOSC10 nucleolar localization and association with core exosome and USP36, but regulates the nucleolar RNA exosome activity in rRNA processing by promoting binding of EXOSC10 to pre-rRNAs. Effects of sumoylation on EXOSC10 levels vary between different studies. Sumoylation of EXOSC10 is required for the modulation of EXOSC10 effects on cellular protein translation and cell proliferation. Sumoylation is promoted by mild hypothermia. As to expression, expressed in testis (at protein level).

Its subcellular location is the cytoplasm. It is found in the nucleus. The protein localises to the nucleolus. The protein resides in the nucleoplasm. Its function is as follows. Catalytic component of the RNA exosome complex which has 3'-&gt;5' exoribonuclease activity and participates in a multitude of cellular RNA processing and degradation events. In the nucleus, the RNA exosome complex is involved in proper maturation of stable RNA species such as rRNA, snRNA and snoRNA, in the elimination of RNA processing by-products and non-coding 'pervasive' transcripts, such as antisense RNA species and promoter-upstream transcripts (PROMPTs), and of mRNAs with processing defects, thereby limiting or excluding their export to the cytoplasm. Part of the small subunit (SSU) processome, first precursor of the small eukaryotic ribosomal subunit. During the assembly of the SSU processome in the nucleolus, many ribosome biogenesis factors, an RNA chaperone and ribosomal proteins associate with the nascent pre-rRNA and work in concert to generate RNA folding, modifications, rearrangements and cleavage as well as targeted degradation of pre-ribosomal RNA by the RNA exosome. The RNA exosome may be involved in Ig class switch recombination (CSR) and/or Ig variable region somatic hypermutation (SHM) by targeting AICDA deamination activity to transcribed dsDNA substrates. In the cytoplasm, the RNA exosome complex is involved in general mRNA turnover and specifically degrades inherently unstable mRNAs containing AU-rich elements (AREs) within their 3' untranslated regions, and in RNA surveillance pathways, preventing translation of aberrant mRNAs. It seems to be involved in degradation of histone mRNA. EXOSC10 is required for nucleolar localization of C1D and probably mediates the association of MTREX, C1D and MPHOSPH6 with the RNA exosome involved in the maturation of 5.8S rRNA. Plays a role in the recruitment of replication protein A complex (RPA) and RAD51 to DNA double-strand breaks caused by irradiation, contributing to DNA repair by homologous recombination. Regulates levels of damage-induced RNAs in order to prevent DNA-RNA hybrid formation at DNA double-strand breaks and limit DNA end resection after damage. Plays a role in oocyte development, maturation and survival. Required for normal testis development and mitotic division of spermatogonia. Plays a role in proper embryo development. Required for global protein translation. Required for cell proliferation. The polypeptide is Exosome complex component 10 (Rattus norvegicus (Rat)).